A 313-amino-acid polypeptide reads, in one-letter code: uncharacterized protein (313 aa).

The N-terminal stretch at 1-24 is a signal peptide; that stretch reads MKRRRRWRGWLLFLALCFCLLCEA. Residues N28, N43, N57, N77, N101, N102, N109, N149, N168, N215, N222, N251, N254, and N267 are each glycosylated (N-linked (GlcNAc...) asparagine; by host). The tract at residues 47–73 is disordered; it reads ATTGTTTTSPNVTSTTSNTVTTPTTVS. The span at 90 to 114 shows a compositional bias: low complexity; that stretch reads STVSGTRNTRNNNTTTIGTNATSPS. A disordered region spans residues 90 to 117; the sequence is STVSGTRNTRNNNTTTIGTNATSPSSSV.

The protein belongs to the HHV-5 US34A protein family.

This is an uncharacterized protein from Homo sapiens (Human).